Here is a 159-residue protein sequence, read N- to C-terminus: Small ribosomal subunit protein uS4 (159 aa).

The S4 RNA-binding domain maps to 106 to 158; the sequence is RRLQTIVYRKGLAKSIYHARQLVVHGHVAVAGRRVTSPGFLVPRDLEDKITLI.

Belongs to the universal ribosomal protein uS4 family. As to quaternary structure, part of the 30S ribosomal subunit. Contacts protein S5. The interaction surface between S4 and S5 is involved in control of translational fidelity.

Functionally, one of the primary rRNA binding proteins, it binds directly to 16S rRNA where it nucleates assembly of the body of the 30S subunit. Its function is as follows. With S5 and S12 plays an important role in translational accuracy. The protein is Small ribosomal subunit protein uS4 of Pyrobaculum islandicum (strain DSM 4184 / JCM 9189 / GEO3).